Consider the following 1136-residue polypeptide: Probable phospholipid-transporting ATPase IIB (1136 aa).

The Cytoplasmic segment spans residues 1–145 (MADQIPLYPV…IKNQKYNIFT (145 aa)). Residues 146–166 (FIPGVLYEQFKFFLNLYFLIV) form a helical membrane-spanning segment. Over 167-174 (SCSQFVPA) the chain is Extracellular. A helical transmembrane segment spans residues 175–195 (LKIGYLYTYWAPLGFVLAVTI). The Cytoplasmic segment spans residues 196-383 (MREAVDEFRR…LDLELNQLTK (188 aa)). A helical membrane pass occupies residues 384-404 (ALFLALVALSVVMVTLQGFAG). At 405 to 408 (PWYR) the chain is on the extracellular side. Residues 409-429 (SLFRFLLLFSYIIPISLRVNL) form a helical membrane-spanning segment. Residues 430-939 (DMGKAAYGWM…ALGQFVMHRG (510 aa)) lie on the Cytoplasmic side of the membrane. Catalysis depends on D469, which acts as the 4-aspartylphosphate intermediate. ATP-binding residues include D469, K470, and T471. D469 is a binding site for Mg(2+). Position 471 (T471) interacts with Mg(2+). The tract at residues 514–538 (AGGSSAASTPPRKAPSSAPKVRRSV) is disordered. 11 residues coordinate ATP: E591, F633, K638, K657, R686, T687, T766, G767, D768, R848, and K854. D874 provides a ligand contact to Mg(2+). ATP is bound by residues N877 and D878. D878 is a binding site for Mg(2+). Residues 940–960 (LIISTMQAVFSSVFYFASVPL) form a helical membrane-spanning segment. Residues 961–962 (YQ) are Extracellular-facing. The chain crosses the membrane as a helical span at residues 963–983 (GFLMVGYATVYTMFPVFSLVL). The Cytoplasmic portion of the chain corresponds to 984 to 1012 (DQDVKPEMAMLYPELYKDLTKGRSLSFKT). The helical transmembrane segment at 1013–1033 (FLVWVLISIYQGGILMFGALV) threads the bilayer. Over 1034–1041 (LFESEFVH) the chain is Extracellular. The chain crosses the membrane as a helical span at residues 1042-1062 (VVAISFTALVLTELLMVALTV). Topologically, residues 1063 to 1066 (RTWH) are cytoplasmic. The chain crosses the membrane as a helical span at residues 1067-1087 (WLMVVAQLLSLGCYVASLAFL). The Extracellular portion of the chain corresponds to 1088-1098 (NEYFDVAFITT). The helical transmembrane segment at 1099-1119 (VTFVWKVSAITVVSCLPLYVL) threads the bilayer. Residues 1120–1136 (KYLKRKLSPPSYSKLSS) lie on the Cytoplasmic side of the membrane.

It belongs to the cation transport ATPase (P-type) (TC 3.A.3) family. Type IV subfamily. Mg(2+) is required as a cofactor.

It localises to the golgi apparatus. Its subcellular location is the trans-Golgi network membrane. The enzyme catalyses ATP + H2O + phospholipidSide 1 = ADP + phosphate + phospholipidSide 2.. This Bos taurus (Bovine) protein is Probable phospholipid-transporting ATPase IIB (ATP9B).